A 262-amino-acid polypeptide reads, in one-letter code: Phosphatidylserine decarboxylase proenzyme (262 aa).

Active-site charge relay system; for autoendoproteolytic cleavage activity residues include Asp86, His142, and Ser226. The active-site Schiff-base intermediate with substrate; via pyruvic acid; for decarboxylase activity is Ser226. Pyruvic acid (Ser); by autocatalysis is present on Ser226.

The protein belongs to the phosphatidylserine decarboxylase family. PSD-B subfamily. Prokaryotic type I sub-subfamily. Heterodimer of a large membrane-associated beta subunit and a small pyruvoyl-containing alpha subunit. Pyruvate is required as a cofactor. Is synthesized initially as an inactive proenzyme. Formation of the active enzyme involves a self-maturation process in which the active site pyruvoyl group is generated from an internal serine residue via an autocatalytic post-translational modification. Two non-identical subunits are generated from the proenzyme in this reaction, and the pyruvate is formed at the N-terminus of the alpha chain, which is derived from the carboxyl end of the proenzyme. The autoendoproteolytic cleavage occurs by a canonical serine protease mechanism, in which the side chain hydroxyl group of the serine supplies its oxygen atom to form the C-terminus of the beta chain, while the remainder of the serine residue undergoes an oxidative deamination to produce ammonia and the pyruvoyl prosthetic group on the alpha chain. During this reaction, the Ser that is part of the protease active site of the proenzyme becomes the pyruvoyl prosthetic group, which constitutes an essential element of the active site of the mature decarboxylase.

The protein resides in the cell membrane. The catalysed reaction is a 1,2-diacyl-sn-glycero-3-phospho-L-serine + H(+) = a 1,2-diacyl-sn-glycero-3-phosphoethanolamine + CO2. The protein operates within phospholipid metabolism; phosphatidylethanolamine biosynthesis; phosphatidylethanolamine from CDP-diacylglycerol: step 2/2. Its function is as follows. Catalyzes the formation of phosphatidylethanolamine (PtdEtn) from phosphatidylserine (PtdSer). The chain is Phosphatidylserine decarboxylase proenzyme from Bacillus cereus (strain ATCC 10987 / NRS 248).